A 179-amino-acid polypeptide reads, in one-letter code: Large ribosomal subunit protein uL5 (179 aa).

The protein belongs to the universal ribosomal protein uL5 family. In terms of assembly, part of the 50S ribosomal subunit; part of the 5S rRNA/L5/L18/L25 subcomplex. Contacts the 5S rRNA and the P site tRNA. Forms a bridge to the 30S subunit in the 70S ribosome.

This is one of the proteins that bind and probably mediate the attachment of the 5S RNA into the large ribosomal subunit, where it forms part of the central protuberance. In the 70S ribosome it contacts protein S13 of the 30S subunit (bridge B1b), connecting the 2 subunits; this bridge is implicated in subunit movement. Contacts the P site tRNA; the 5S rRNA and some of its associated proteins might help stabilize positioning of ribosome-bound tRNAs. The sequence is that of Large ribosomal subunit protein uL5 from Prochlorococcus marinus (strain MIT 9312).